Consider the following 349-residue polypeptide: Glycerol-3-phosphate dehydrogenase [NAD(P)+] (349 aa).

Residues Ser31, Phe32, Arg52, Lys53, and Lys126 each contribute to the NADPH site. Sn-glycerol 3-phosphate is bound by residues Lys126, Gly154, and Ser156. Position 158 (Ala158) interacts with NADPH. Residues Lys209, Asp262, Ser272, Arg273, and Asn274 each contribute to the sn-glycerol 3-phosphate site. The Proton acceptor role is filled by Lys209. Arg273 is a binding site for NADPH. The NADPH site is built by Val297 and Glu299.

It belongs to the NAD-dependent glycerol-3-phosphate dehydrogenase family.

The protein resides in the cytoplasm. It catalyses the reaction sn-glycerol 3-phosphate + NAD(+) = dihydroxyacetone phosphate + NADH + H(+). The enzyme catalyses sn-glycerol 3-phosphate + NADP(+) = dihydroxyacetone phosphate + NADPH + H(+). The protein operates within membrane lipid metabolism; glycerophospholipid metabolism. In terms of biological role, catalyzes the reduction of the glycolytic intermediate dihydroxyacetone phosphate (DHAP) to sn-glycerol 3-phosphate (G3P), the key precursor for phospholipid synthesis. This chain is Glycerol-3-phosphate dehydrogenase [NAD(P)+], found in Clostridium tetani (strain Massachusetts / E88).